We begin with the raw amino-acid sequence, 672 residues long: Amidase chyE (672 aa).

C2 acts as the Nucleophile in catalysis. The region spanning 2 to 219 (CGISAFLCHP…PGHYLISRPN (218 aa)) is the Glutamine amidotransferase type-2 domain. Positions 250 to 639 (VRKRLLEAVK…TQEAVEKAFT (390 aa)) constitute an Asparagine synthetase domain.

Belongs to the asparagine synthetase family.

The protein operates within pigment biosynthesis. Amidase; part of the gene cluster that mediates the biosynthesis of the yellow pigment chrysogine. the NRPS chyA mediates the condensation of anthranilic acid and alanine into the intermediate 2-(2-aminopropanamido)benzoic acid. The remainder of the pathway is highly branched yielding at least 13 chrysogine-related compounds. The malonyl transferase chyE converts 2-(2-aminopropanamido)benzoic acid and 2-(2-aminopropanamido)benzamidine into 2-(2-(2-carboxyacetamido)propanamido)benzoic acid and 3-((1-((2-carbamoylphenyl)amino)-1-oxopropan-2-yl)amino)-3-oxopropanoic acid, respectively. ChyD is an amidase, being responsible for the amidation of the carboxylic acid moiety of 2-(2-aminopropanamido)benzoic acid, 2-(2-(2-carboxyacetamido)propanamido)benzoic acid and 2-(2-((4-amino-1-carboxy-4-oxobutyl)amino)propanamido)benzoic acid. ChyC is involved in the same reactions as ChyD, but plays a more minor role in the amidation reactions compared to chyD. The oxidoreductases chyH and chyM are involved in oxidation reactions that form N-pyruvoylanthranilamide from 2-(2-aminopropanamido)benzamidine and (1-((2-carbamoylphenyl)amino)-1-oxopropan-2-yl)glutamine, respectively. N-pyruvoylanthranilamide is further converted via two further branches in the pathway, yielding chrysogine and additional chrysogine-related coumpounds. Chrysogine is likely formed by a spontaneous ring closure from N-pyruvoylanthranilamide. This Penicillium rubens (strain ATCC 28089 / DSM 1075 / NRRL 1951 / Wisconsin 54-1255) (Penicillium chrysogenum) protein is Amidase chyE.